Reading from the N-terminus, the 911-residue chain is Gem-associated protein 4a (911 aa).

As to quaternary structure, component of the core survival motor neuron (SMN) complex composed of Smn, Gem2, Gem3, rig/Gem5 and one of 3 almost identical Gem4 paralogs encoded by Glos/Gem4a, Gem4b or Gem4c. Interacts with Smn; the interaction is probably indirect.

Functionally, component of the survival motor neuron (SMN) complex that catalyzes the assembly of small nuclear ribonucleoproteins (snRNPs), the building blocks of the spliceosome, and thereby plays an important role in the splicing of cellular pre-mRNAs. One of 3 almost identical paralogs (Glos/Gem4a, Gem4b and Gem4c), resulting from a genomic triplication, that have some redundant function. Required for neuromuscular function and organismal viability. This chain is Gem-associated protein 4a, found in Drosophila melanogaster (Fruit fly).